Reading from the N-terminus, the 330-residue chain is MTLIVTGAAGFIGANIVKALNERGETRIIAVDNLTRADKFRNLVDCEIDDYLDKTEFVERFARGDFGKVRAVFHEGACSDTMETDGRYMMDNNFRYSRAVLDTCLMQGTQFLYASSAAIYGGSTRFVEERDVEAPLNVYGYSKFLFDQVIRRVLPSAKSQIAGFRYFNVYGPRETHKGRMASVAFHNFNQFRAEGKVKLFGEYNGYAPGEQTRDFVSVEDVTKVNLFFFDHPEKSGIFNLGTGRAQPFNDIASTVVNTLRALDNQPPLTLAQQVEQGLIEYVPFPDALRGKYQCFTQADQTKLRAAGYDAPFLTVQEGVDRYVRWLSGQV.

NADP(+)-binding positions include 11–12 (FI), 32–33 (DN), K39, K54, 75–79 (EGACS), and N92. Y139 serves as the catalytic Proton acceptor. K143 contacts NADP(+). Residue N168 coordinates substrate. V169 and K177 together coordinate NADP(+). Catalysis depends on K177, which acts as the Proton acceptor. Substrate is bound by residues R179, H186, 200–203 (FGEY), R213, and Y292.

This sequence belongs to the NAD(P)-dependent epimerase/dehydratase family. HldD subfamily. In terms of assembly, homopentamer. The cofactor is NADP(+).

It catalyses the reaction ADP-D-glycero-beta-D-manno-heptose = ADP-L-glycero-beta-D-manno-heptose. The protein operates within nucleotide-sugar biosynthesis; ADP-L-glycero-beta-D-manno-heptose biosynthesis; ADP-L-glycero-beta-D-manno-heptose from D-glycero-beta-D-manno-heptose 7-phosphate: step 4/4. Its function is as follows. Catalyzes the interconversion between ADP-D-glycero-beta-D-manno-heptose and ADP-L-glycero-beta-D-manno-heptose via an epimerization at carbon 6 of the heptose. In Burkholderia cenocepacia (strain ATCC BAA-245 / DSM 16553 / LMG 16656 / NCTC 13227 / J2315 / CF5610) (Burkholderia cepacia (strain J2315)), this protein is ADP-L-glycero-D-manno-heptose-6-epimerase.